We begin with the raw amino-acid sequence, 570 residues long: Conserved oligomeric Golgi complex subunit 8 (570 aa).

Belongs to the COG8 family. In terms of assembly, component of the conserved oligomeric Golgi complex which is composed of eight different subunits and is required for normal Golgi morphology and localization.

It localises to the golgi apparatus membrane. Its function is as follows. Required for normal Golgi function. The chain is Conserved oligomeric Golgi complex subunit 8 from Drosophila melanogaster (Fruit fly).